The following is a 1070-amino-acid chain: uncharacterized protein (1070 aa).

The region spanning 477–523 is the UBA domain; sequence LIDTNQLLLRQLQQIVKLGIFNEKKIKEELKANKFNEQVALQILESE.

This is an uncharacterized protein from Sulfolobus islandicus rod-shaped virus 1 (SIRV-1).